The sequence spans 219 residues: UPF0502 protein Gmet_0262 (219 aa).

Belongs to the UPF0502 family.

The polypeptide is UPF0502 protein Gmet_0262 (Geobacter metallireducens (strain ATCC 53774 / DSM 7210 / GS-15)).